The sequence spans 1100 residues: DNA-directed RNA polymerase subunit beta (1100 aa).

The tract at residues 1064–1100 (YEEDKEVDLMADVNQRRTPSRPTYESMSVGDIDDDDD) is disordered. A compositionally biased stretch (polar residues) spans 1079-1089 (RRTPSRPTYES).

It belongs to the RNA polymerase beta chain family. As to quaternary structure, in cyanobacteria the RNAP catalytic core is composed of 2 alpha, 1 beta, 1 beta', 1 gamma and 1 omega subunit. When a sigma factor is associated with the core the holoenzyme is formed, which can initiate transcription.

The enzyme catalyses RNA(n) + a ribonucleoside 5'-triphosphate = RNA(n+1) + diphosphate. In terms of biological role, DNA-dependent RNA polymerase catalyzes the transcription of DNA into RNA using the four ribonucleoside triphosphates as substrates. The chain is DNA-directed RNA polymerase subunit beta from Synechococcus sp. (strain ATCC 27144 / PCC 6301 / SAUG 1402/1) (Anacystis nidulans).